The following is a 134-amino-acid chain: ATP synthase epsilon chain, chloroplastic (134 aa).

Belongs to the ATPase epsilon chain family. In terms of assembly, F-type ATPases have 2 components, CF(1) - the catalytic core - and CF(0) - the membrane proton channel. CF(1) has five subunits: alpha(3), beta(3), gamma(1), delta(1), epsilon(1). CF(0) has three main subunits: a, b and c.

The protein localises to the plastid. It is found in the chloroplast thylakoid membrane. In terms of biological role, produces ATP from ADP in the presence of a proton gradient across the membrane. This chain is ATP synthase epsilon chain, chloroplastic, found in Chlorella vulgaris (Green alga).